A 268-amino-acid polypeptide reads, in one-letter code: Lipase (268 aa).

An N-terminal signal peptide occupies residues 1-34 (MRLSRRAATASALLLTPALALFGASAAVSAPRIQ). Catalysis depends on S44, which acts as the Nucleophile. 3 cysteine pairs are disulfide-bonded: C61-C86, C127-C135, and C185-C232. The active site involves H250.

In terms of assembly, monomer.

It is found in the secreted. The catalysed reaction is a triacylglycerol + H2O = a diacylglycerol + a fatty acid + H(+). It carries out the reaction hexadecanoyl-CoA + H2O = hexadecanoate + CoA + H(+). With respect to regulation, inhibited by 3,4-dichloroisocoumarin and tetrahydrolipstatin in the absence of substrate, but by phenylmethylsulfonyl fluoride (PMSF) only in the presence of substrate. Several water-miscible solvents enhance the lipase hydrolytic activity in vitro. Tetrahydrofuran and N,N-dimethylformamide (both 50%) inactivate the enzyme with t1/2 of 5 minutes and t1/2 of 2 hours, respectively. Catalyzes the hydrolysis of p-nitrophenyl esters, alpha- and beta-naphthyl esters, and triacylglycerols, with a preference for medium acyl chain length (C8-C12). Shows a much higher hydrolysis rate of glycerol esters of unsaturated C16 and C18 fatty acids than that of their saturated counterparts, and a preference for cis double bond. Is also able to hydrolyze several natural oils and Tween detergents. Also displays thioesterase and phospholipase activities, towards palmitoyl-coenzyme A and diheptanoyl glycerophosphocholine, respectively. Shows transesterification activity of racemic 1-phenyl ethanol with vinyl acetate in hexane, proceeding with partial (R)-enantioselectivity. This is Lipase from Streptomyces rimosus.